Consider the following 403-residue polypeptide: Tyrosine--tRNA ligase (403 aa).

Positions 42–51 (PTAPDLHLGH) match the 'HIGH' region motif. A 'KMSKS' region motif is present at residues 226–230 (KMSKS). Residue K229 coordinates ATP. An S4 RNA-binding domain is found at 336–396 (MPISAVLNKA…GKKAFGRVTL (61 aa)).

Belongs to the class-I aminoacyl-tRNA synthetase family. TyrS type 2 subfamily. As to quaternary structure, homodimer.

The protein localises to the cytoplasm. It carries out the reaction tRNA(Tyr) + L-tyrosine + ATP = L-tyrosyl-tRNA(Tyr) + AMP + diphosphate + H(+). In terms of biological role, catalyzes the attachment of tyrosine to tRNA(Tyr) in a two-step reaction: tyrosine is first activated by ATP to form Tyr-AMP and then transferred to the acceptor end of tRNA(Tyr). The protein is Tyrosine--tRNA ligase of Pseudomonas syringae pv. syringae (strain B728a).